The primary structure comprises 287 residues: Small ribosomal subunit biogenesis GTPase RsgA (287 aa).

One can recognise a CP-type G domain in the interval 61-218 (ISQLKRPAVA…MVDTPGFSSL (158 aa)). GTP-binding positions include 110–113 (NKLD) and 161–169 (GPSGVGKST). Positions 242, 247, 249, and 255 each coordinate Zn(2+).

Belongs to the TRAFAC class YlqF/YawG GTPase family. RsgA subfamily. Monomer. Associates with 30S ribosomal subunit, binds 16S rRNA. It depends on Zn(2+) as a cofactor.

It localises to the cytoplasm. One of several proteins that assist in the late maturation steps of the functional core of the 30S ribosomal subunit. Helps release RbfA from mature subunits. May play a role in the assembly of ribosomal proteins into the subunit. Circularly permuted GTPase that catalyzes slow GTP hydrolysis, GTPase activity is stimulated by the 30S ribosomal subunit. This is Small ribosomal subunit biogenesis GTPase RsgA from Clostridium kluyveri (strain NBRC 12016).